A 549-amino-acid chain; its full sequence is Oxygen-dependent choline dehydrogenase (549 aa).

4–33 serves as a coordination point for FAD; it reads DFVIIGSGSAGSAMAYRLSEDGRYSVIVIE. His-465 functions as the Proton acceptor in the catalytic mechanism.

It belongs to the GMC oxidoreductase family. The cofactor is FAD.

The catalysed reaction is choline + A = betaine aldehyde + AH2. The enzyme catalyses betaine aldehyde + NAD(+) + H2O = glycine betaine + NADH + 2 H(+). The protein operates within amine and polyamine biosynthesis; betaine biosynthesis via choline pathway; betaine aldehyde from choline (cytochrome c reductase route): step 1/1. In terms of biological role, involved in the biosynthesis of the osmoprotectant glycine betaine. Catalyzes the oxidation of choline to betaine aldehyde and betaine aldehyde to glycine betaine at the same rate. The sequence is that of Oxygen-dependent choline dehydrogenase from Brucella ovis (strain ATCC 25840 / 63/290 / NCTC 10512).